The chain runs to 185 residues: Alcohol dehydrogenase 1 (185 aa).

Residues 10–15 (GLGGVG), Asp34, Lys39, 103–105 (VGV), and Arg180 contribute to the NAD(+) site.

It belongs to the zinc-containing alcohol dehydrogenase family. Class-I subfamily. In terms of assembly, homodimer. Requires Zn(2+) as cofactor.

It is found in the cytoplasm. The enzyme catalyses a primary alcohol + NAD(+) = an aldehyde + NADH + H(+). It catalyses the reaction a secondary alcohol + NAD(+) = a ketone + NADH + H(+). This is Alcohol dehydrogenase 1 (ADH1) from Anas platyrhynchos (Mallard).